We begin with the raw amino-acid sequence, 358 residues long: Alpha-ketoglutarate-dependent L-arginine hydroxylase (358 aa).

Positions 1–21 (MTESPTTHHGAAPPDSVATPV) are disordered. Residues 117–135 (LSFLLMLYAGLLGDVFGWA) form a helical membrane-spanning segment. 156-158 (LVS) is a binding site for L-arginine. 2 residues coordinate Fe cation: His-168 and Glu-170. Thr-194 lines the 2-oxoglutarate pocket. 268–270 (DGD) is a binding site for L-arginine. A Fe cation-binding site is contributed by His-316. Positions 330 and 334 each coordinate 2-oxoglutarate. Position 334 (Arg-334) interacts with L-arginine.

The protein belongs to the clavaminate synthase family. It depends on Fe cation as a cofactor.

The protein localises to the membrane. The catalysed reaction is L-arginine + 2-oxoglutarate + O2 = (2S,3S)-hydroxyarginine + succinate + CO2. It functions in the pathway antibiotic biosynthesis. Involved in the biosynthesis of capreomycidine, an unusual amino acid used by non-ribosomal peptide synthases (NRPS) to make the tuberactinomycin class of peptide antibiotics such as viomycin and capreomycin. Catalyzes the stereospecific hydroxylation of the C3 of (2S)-arginine to generate (3S)-hydroxy-(2S)-arginine. Usually clavaminic acid synthase-like oxygenases catalyze the formation of threo diastereomers, however VioC produces the erythro diastereomer of beta-carbon-hydroxylated L-arginine. It exerts a broad substrate specificity by accepting the analogs L-homoarginine and L-canavanine for the beta-carbon hydroxylation. The polypeptide is Alpha-ketoglutarate-dependent L-arginine hydroxylase (vioC) (Streptomyces vinaceus).